Here is a 628-residue protein sequence, read N- to C-terminus: tRNA uridine 5-carboxymethylaminomethyl modification enzyme MnmG (628 aa).

Residue 13–18 participates in FAD binding; the sequence is GAGHAG. 273–287 is an NAD(+) binding site; sequence GPRYCPSIEDKIVRF.

Belongs to the MnmG family. In terms of assembly, homodimer. Heterotetramer of two MnmE and two MnmG subunits. The cofactor is FAD.

The protein localises to the cytoplasm. Functionally, NAD-binding protein involved in the addition of a carboxymethylaminomethyl (cmnm) group at the wobble position (U34) of certain tRNAs, forming tRNA-cmnm(5)s(2)U34. This is tRNA uridine 5-carboxymethylaminomethyl modification enzyme MnmG from Buchnera aphidicola subsp. Acyrthosiphon pisum (strain Tuc7).